The primary structure comprises 340 residues: GTP 3',8-cyclase (340 aa).

One can recognise a Radical SAM core domain in the interval 8–227; it reads KLGRPIRDLR…EMIEQNFDIE (220 aa). Residue arginine 17 coordinates GTP. [4Fe-4S] cluster is bound by residues cysteine 24 and cysteine 28. Tyrosine 30 contacts S-adenosyl-L-methionine. Cysteine 31 is a binding site for [4Fe-4S] cluster. Residue arginine 71 participates in GTP binding. Glycine 75 serves as a coordination point for S-adenosyl-L-methionine. Threonine 102 contacts GTP. An S-adenosyl-L-methionine-binding site is contributed by serine 126. Lysine 163 is a binding site for GTP. Residue methionine 197 participates in S-adenosyl-L-methionine binding. Positions 261 and 264 each coordinate [4Fe-4S] cluster. 266–268 serves as a coordination point for GTP; the sequence is RAR. Cysteine 278 is a binding site for [4Fe-4S] cluster.

It belongs to the radical SAM superfamily. MoaA family. In terms of assembly, monomer and homodimer. Requires [4Fe-4S] cluster as cofactor.

It catalyses the reaction GTP + AH2 + S-adenosyl-L-methionine = (8S)-3',8-cyclo-7,8-dihydroguanosine 5'-triphosphate + 5'-deoxyadenosine + L-methionine + A + H(+). It participates in cofactor biosynthesis; molybdopterin biosynthesis. In terms of biological role, catalyzes the cyclization of GTP to (8S)-3',8-cyclo-7,8-dihydroguanosine 5'-triphosphate. This Staphylococcus saprophyticus subsp. saprophyticus (strain ATCC 15305 / DSM 20229 / NCIMB 8711 / NCTC 7292 / S-41) protein is GTP 3',8-cyclase.